A 354-amino-acid polypeptide reads, in one-letter code: UPF0283 membrane protein HI_0043 (354 aa).

3 helical membrane passes run 57 to 77 (LLKF…VQWI), 87 to 107 (IYLA…KEII), and 211 to 231 (ESAV…FIAW).

This sequence belongs to the UPF0283 family.

The protein localises to the cell inner membrane. The sequence is that of UPF0283 membrane protein HI_0043 from Haemophilus influenzae (strain ATCC 51907 / DSM 11121 / KW20 / Rd).